Consider the following 154-residue polypeptide: Methylglyoxal synthase (154 aa).

The MGS-like domain occupies 6-154; that stretch reads QSLPAKKNIA…KYLATRQIDI (149 aa). Residues histidine 19, lysine 23, 45–48, and 65–66 each bind substrate; these read TGTT and SG. Aspartate 71 functions as the Proton donor/acceptor in the catalytic mechanism. Substrate is bound at residue histidine 98.

It belongs to the methylglyoxal synthase family.

It carries out the reaction dihydroxyacetone phosphate = methylglyoxal + phosphate. Functionally, catalyzes the formation of methylglyoxal from dihydroxyacetone phosphate. This chain is Methylglyoxal synthase, found in Pseudoalteromonas translucida (strain TAC 125).